The primary structure comprises 240 residues: Lipoprotein-releasing system ATP-binding protein LolD (240 aa).

Residues 15–240 (IRAERLGKTY…GLRELTSAEV (226 aa)) form the ABC transporter domain. 51–58 (GASGAGKS) serves as a coordination point for ATP.

Belongs to the ABC transporter superfamily. Lipoprotein translocase (TC 3.A.1.125) family. In terms of assembly, the complex is composed of two ATP-binding proteins (LolD) and two transmembrane proteins (LolC and LolE).

The protein localises to the cell inner membrane. Part of the ABC transporter complex LolCDE involved in the translocation of mature outer membrane-directed lipoproteins, from the inner membrane to the periplasmic chaperone, LolA. Responsible for the formation of the LolA-lipoprotein complex in an ATP-dependent manner. The chain is Lipoprotein-releasing system ATP-binding protein LolD from Xylella fastidiosa (strain 9a5c).